A 644-amino-acid polypeptide reads, in one-letter code: Zinc finger protein 74 (644 aa).

Positions 43–114 constitute a KRAB domain; it reads VSFKDVAVDF…QREVPRGPCP (72 aa). C2H2-type zinc fingers lie at residues 248–270, 276–298, 304–326, 332–354, 360–382, 388–410, 416–438, 444–466, 472–494, 500–522, 528–550, and 556–578; these read FVCG…RRWH, YKCD…RRIH, FFCG…QRIH, YKCS…LRVH, YRCG…HRIH, YQCG…EKIH, FKCS…QRTH, FKCA…RRIH, FKCN…RRIH, FDCS…QRIH, YKCS…QKIH, and FKCE…QRLH. Lys582 is covalently cross-linked (Glycyl lysine isopeptide (Lys-Gly) (interchain with G-Cter in SUMO2)).

Belongs to the krueppel C2H2-type zinc-finger protein family. As to expression, highly expressed in the fetal brain.

The protein localises to the nucleus. May play a role in RNA metabolism. This chain is Zinc finger protein 74 (ZNF74), found in Homo sapiens (Human).